We begin with the raw amino-acid sequence, 256 residues long: L-tyrosine degradation gene cluster protein hmgX (256 aa).

This sequence belongs to the TTC36 family.

Its subcellular location is the cytoplasm. Functionally, part of the L-tyrosine degradation gene cluster that mediates the biosynthesis of the brownish pigment pyomelanin as an alternative melanin. The 4-hydroxyphenylpyruvate dioxygenase hppD catalyzes the conversion of 4-hydroxyphenylpyruvate to homogentisic acid (HGA). The protein hmgX is crucial for this conversion and thus, probably functions as an accessory factor to mediate specific activity of hppD. The homogentisate 1,2-dioxygenase hmgA is then involved in the cleavage of the aromatic ring of HGA and its conversion to 4-maleylacetoacetate. When hmgA activity is lowered by the cell wall integrity (CWI) signaling pathway, HGA accumulates and leads to the production of pyomelanin through benzoquinone acetic acid after oxidation and polymerization. On the opposite, in non-stress conditions, both hppD and hmgA activities are balanced and HGA is degraded into 4-maleylacetoacetate. 4-maleylacetoacetate is further converted to 4-fumarylacetoacetate by the maleylacetoacetate isomerase maiA, which is degraded into fumarate and acetoacetate by the fumarylacetoacetase fahA. The sequence is that of L-tyrosine degradation gene cluster protein hmgX from Aspergillus fumigatus (strain ATCC MYA-4609 / CBS 101355 / FGSC A1100 / Af293) (Neosartorya fumigata).